A 167-amino-acid chain; its full sequence is Protein-export protein SecB (167 aa).

Belongs to the SecB family. In terms of assembly, homotetramer, a dimer of dimers. One homotetramer interacts with 1 SecA dimer.

It is found in the cytoplasm. Functionally, one of the proteins required for the normal export of preproteins out of the cell cytoplasm. It is a molecular chaperone that binds to a subset of precursor proteins, maintaining them in a translocation-competent state. It also specifically binds to its receptor SecA. The polypeptide is Protein-export protein SecB (Wolbachia pipientis wMel).